The sequence spans 165 residues: Peptidyl-prolyl cis-trans isomerase A (165 aa).

Met1 carries the post-translational modification N-acetylmethionine. Val2 is modified (N-acetylvaline; in Peptidyl-prolyl cis-trans isomerase A, N-terminally processed). Positions Phe7 to Gln163 constitute a PPIase cyclophilin-type domain. Lys28 is modified (N6-acetyllysine; alternate). Lys28 is covalently cross-linked (Glycyl lysine isopeptide (Lys-Gly) (interchain with G-Cter in SUMO2); alternate). Lys28 participates in a covalent cross-link: Glycyl lysine isopeptide (Lys-Gly) (interchain with G-Cter in ubiquitin); alternate. N6-acetyllysine is present on residues Lys44 and Lys76. Ser77 carries the phosphoserine modification. Lys82 is modified (N6-acetyllysine; alternate). Lys82 is covalently cross-linked (Glycyl lysine isopeptide (Lys-Gly) (interchain with G-Cter in SUMO2); alternate). Thr93 is modified (phosphothreonine). Asn108 is a glycosylation site (N-linked (GlcNAc...) asparagine). An N6-acetyllysine mark is found at Lys125, Lys131, and Lys133.

The protein belongs to the cyclophilin-type PPIase family. PPIase A subfamily. Interacts with protein phosphatase PPP3CA/calcineurin A. Interacts with isoform 2 of BSG/CD147. Interacts with FOXO1; the interaction promotes FOXO1 dephosphorylation, nuclear accumulation and transcriptional activity. Interacts with integrin ITGA2B:ITGB3; the interaction is ROS and peptidyl-prolyl cis-trans isomerase (PPIase) activity-dependent and is increased in the presence of thrombin. Interacts with MAP3K5. Interacts with TARDBP; the interaction is dependent on the RNA-binding activity of TARDBP and the PPIase activity of PPIA/CYPA and the acetylation of PPIA/CYPA at Lys-125 favors the interaction. Interacts with HNRNPA1, HNRNPA2B1, HNRNPC, RBMX, HNRNPK and HNRNPM. Post-translationally, acetylation at Lys-125 markedly inhibits catalysis of cis to trans isomerization. PPIA acetylation also antagonizes the immunosuppressive effects of cyclosporine by inhibiting the sequential steps of cyclosporine binding and calcineurin inhibition. Acetylation at Lys-125 favors the interaction with TARDBP.

The protein localises to the cytoplasm. Its subcellular location is the secreted. It is found in the nucleus. The catalysed reaction is [protein]-peptidylproline (omega=180) = [protein]-peptidylproline (omega=0). Its activity is regulated as follows. Binds cyclosporin A (CsA). CsA mediates some of its effects via an inhibitory action on PPIase. Functionally, catalyzes the cis-trans isomerization of proline imidic peptide bonds in oligopeptides. Exerts a strong chemotactic effect on leukocytes partly through activation of one of its membrane receptors BSG/CD147, initiating a signaling cascade that culminates in MAPK/ERK activation. Activates endothelial cells (ECs) in a proinflammatory manner by stimulating activation of NF-kappa-B and ERK, JNK and p38 MAP-kinases and by inducing expression of adhesion molecules including SELE and VCAM1. Induces apoptosis in ECs by promoting the FOXO1-dependent expression of CCL2 and BCL2L11 which are involved in EC chemotaxis and apoptosis. In response to oxidative stress, initiates proapoptotic and antiapoptotic signaling in ECs via activation of NF-kappa-B and AKT1 and up-regulation of antiapoptotic protein BCL2. Negatively regulates MAP3K5/ASK1 kinase activity, autophosphorylation and oxidative stress-induced apoptosis mediated by MAP3K5/ASK1. Necessary for the assembly of TARDBP in heterogeneous nuclear ribonucleoprotein (hnRNP) complexes and regulates TARDBP binding to RNA UG repeats and TARDBP-dependent expression of HDAC6, ATG7 and VCP which are involved in clearance of protein aggregates. Plays an important role in platelet activation and aggregation. Regulates calcium mobilization and integrin ITGA2B:ITGB3 bidirectional signaling via increased ROS production as well as by facilitating the interaction between integrin and the cell cytoskeleton. Binds heparan sulfate glycosaminoglycans. The sequence is that of Peptidyl-prolyl cis-trans isomerase A (PPIA) from Symphalangus syndactylus (Siamang).